A 173-amino-acid chain; its full sequence is Skp-like protein (173 aa).

A signal peptide spans 1-19 (MKKFLLLSLMSLASSTVFA).

It belongs to the Skp family.

In Chlamydia muridarum (strain MoPn / Nigg), this protein is Skp-like protein.